Reading from the N-terminus, the 466-residue chain is Adenosylhomocysteinase (466 aa).

The substrate site is built by threonine 57, aspartate 132, and glutamate 192. Residue 193–195 participates in NAD(+) binding; that stretch reads TTT. Positions 222 and 226 each coordinate substrate. NAD(+)-binding positions include asparagine 227, 256-261, glutamate 279, asparagine 314, 335-337, and asparagine 380; these read GYGDVG and IGH.

Belongs to the adenosylhomocysteinase family. The cofactor is NAD(+).

The protein localises to the cytoplasm. It catalyses the reaction S-adenosyl-L-homocysteine + H2O = L-homocysteine + adenosine. It functions in the pathway amino-acid biosynthesis; L-homocysteine biosynthesis; L-homocysteine from S-adenosyl-L-homocysteine: step 1/1. May play a key role in the regulation of the intracellular concentration of adenosylhomocysteine. This Rhizobium rhizogenes (strain K84 / ATCC BAA-868) (Agrobacterium radiobacter) protein is Adenosylhomocysteinase.